The chain runs to 247 residues: Translation initiation factor IF-3 (247 aa).

Disordered stretches follow at residues 1-20 (MIREQRSSRGGSRDQRTNRR) and 188-247 (LVRQ…PTAS). The interval 182–247 (AQKARELVRQ…AAEAQSPTAS (66 aa)) is needed for vegetative and developmental functions, but not for viability. A compositionally biased stretch (low complexity) spans 207-217 (AGKSAAGASSG). Positions 218–232 (AEEKAEETAEEKKEA) are enriched in basic and acidic residues. Positions 233-247 (QAAPAAAEAQSPTAS) are enriched in low complexity.

This sequence belongs to the IF-3 family. In terms of assembly, monomer.

Its subcellular location is the cytoplasm. IF-3 binds to the 30S ribosomal subunit and shifts the equilibrium between 70S ribosomes and their 50S and 30S subunits in favor of the free subunits, thus enhancing the availability of 30S subunits on which protein synthesis initiation begins. The chain is Translation initiation factor IF-3 from Myxococcus xanthus.